We begin with the raw amino-acid sequence, 446 residues long: tRNA modification GTPase MnmE (446 aa).

The (6S)-5-formyl-5,6,7,8-tetrahydrofolate site is built by R22, E80, and K119. The TrmE-type G domain maps to 215 to 370 (GLSLVIAGRP…LKKVIKQVVG (156 aa)). K(+) is bound at residue N225. Residues 225–230 (NAGKST), 244–250 (TEIAGTT), and 269–272 (DTAG) contribute to the GTP site. S229 is a Mg(2+) binding site. Positions 244, 246, and 249 each coordinate K(+). Residue T250 participates in Mg(2+) binding. K446 provides a ligand contact to (6S)-5-formyl-5,6,7,8-tetrahydrofolate.

Belongs to the TRAFAC class TrmE-Era-EngA-EngB-Septin-like GTPase superfamily. TrmE GTPase family. Homodimer. Heterotetramer of two MnmE and two MnmG subunits. It depends on K(+) as a cofactor.

It is found in the cytoplasm. Exhibits a very high intrinsic GTPase hydrolysis rate. Involved in the addition of a carboxymethylaminomethyl (cmnm) group at the wobble position (U34) of certain tRNAs, forming tRNA-cmnm(5)s(2)U34. The sequence is that of tRNA modification GTPase MnmE from Legionella pneumophila subsp. pneumophila (strain Philadelphia 1 / ATCC 33152 / DSM 7513).